We begin with the raw amino-acid sequence, 229 residues long: Uracil-DNA glycosylase (229 aa).

Catalysis depends on aspartate 64, which acts as the Proton acceptor.

Belongs to the uracil-DNA glycosylase (UDG) superfamily. UNG family.

It localises to the cytoplasm. The catalysed reaction is Hydrolyzes single-stranded DNA or mismatched double-stranded DNA and polynucleotides, releasing free uracil.. In terms of biological role, excises uracil residues from the DNA which can arise as a result of misincorporation of dUMP residues by DNA polymerase or due to deamination of cytosine. This is Uracil-DNA glycosylase from Escherichia coli (strain 55989 / EAEC).